The sequence spans 263 residues: Small ribosomal subunit protein eS4 (263 aa).

The S4 RNA-binding domain occupies 42-104; the sequence is LPLIIFLRNR…TGEHFRLVYD (63 aa).

It belongs to the eukaryotic ribosomal protein eS4 family.

The sequence is that of Small ribosomal subunit protein eS4 (RPS4) from Gallus gallus (Chicken).